Here is a 142-residue protein sequence, read N- to C-terminus: Small ribosomal subunit protein bS6 (142 aa).

Residues 110 to 133 show a composition bias toward basic and acidic residues; that stretch reads NKKPSHAKEKHEKTEHTHSHHTEE. Residues 110 to 142 are disordered; that stretch reads NKKPSHAKEKHEKTEHTHSHHTEEAESVGSHSE.

This sequence belongs to the bacterial ribosomal protein bS6 family.

Its function is as follows. Binds together with bS18 to 16S ribosomal RNA. In Helicobacter pylori (strain ATCC 700392 / 26695) (Campylobacter pylori), this protein is Small ribosomal subunit protein bS6 (rpsF).